Consider the following 72-residue polypeptide: Large ribosomal subunit protein uL29 (72 aa).

It belongs to the universal ribosomal protein uL29 family.

This Prochlorococcus marinus (strain MIT 9301) protein is Large ribosomal subunit protein uL29.